The sequence spans 795 residues: Lon protease (795 aa).

The 207-residue stretch at 7 to 213 (SQILVVRGQV…KIIQAGIEDL (207 aa)) folds into the Lon N-terminal domain. 379 to 386 (GPPGVGKS) contacts ATP. The Lon proteolytic domain maps to 615–795 (VSLPGIVNGM…YSDIYNKLFS (181 aa)). Catalysis depends on residues Ser702 and Lys745.

Belongs to the peptidase S16 family. Homohexamer. Organized in a ring with a central cavity.

It localises to the cytoplasm. It catalyses the reaction Hydrolysis of proteins in presence of ATP.. In terms of biological role, ATP-dependent serine protease that mediates the selective degradation of mutant and abnormal proteins as well as certain short-lived regulatory proteins. Required for cellular homeostasis and for survival from DNA damage and developmental changes induced by stress. Degrades polypeptides processively to yield small peptide fragments that are 5 to 10 amino acids long. Binds to DNA in a double-stranded, site-specific manner. The protein is Lon protease of Mycoplasma genitalium (strain ATCC 33530 / DSM 19775 / NCTC 10195 / G37) (Mycoplasmoides genitalium).